The following is a 365-amino-acid chain: c-di-GMP synthase (365 aa).

It belongs to the CD-NTase family. E subfamily.

The enzyme catalyses 2 GTP = 3',3'-c-di-GMP + 2 diphosphate. In terms of biological role, cyclic nucleotide synthase (second messenger synthase) of a CBASS antivirus system. CBASS (cyclic oligonucleotide-based antiphage signaling system) provides immunity against bacteriophage. The CD-NTase protein synthesizes cyclic nucleotides in response to infection; these serve as specific second messenger signals. The signals activate a diverse range of effectors, leading to bacterial cell death and thus abortive phage infection. A type I-D(GG) CBASS system. Cyclic dinucleotide synthase that catalyzes the synthesis of c-di-GMP, has no activity with other NTP substrates. The polypeptide is c-di-GMP synthase (Flavobacteriaceae sp. genome_bin_11).